The following is a 148-amino-acid chain: [Ribosomal protein bS18]-alanine N-acetyltransferase (148 aa).

Residues 2–147 (NTISSLETTD…DAIIMALPIS (146 aa)) form the N-acetyltransferase domain. Residue 69 to 71 (IAV) coordinates acetyl-CoA. The Proton acceptor role is filled by glutamate 103. Asparagine 108 is an acetyl-CoA binding site. The active-site Proton donor is the tyrosine 115.

This sequence belongs to the acetyltransferase family. RimI subfamily.

The protein resides in the cytoplasm. The enzyme catalyses N-terminal L-alanyl-[ribosomal protein bS18] + acetyl-CoA = N-terminal N(alpha)-acetyl-L-alanyl-[ribosomal protein bS18] + CoA + H(+). Acetylates the N-terminal alanine of ribosomal protein bS18. This chain is [Ribosomal protein bS18]-alanine N-acetyltransferase, found in Escherichia coli O157:H7.